The chain runs to 209 residues: Nucleoside triphosphate pyrophosphatase (209 aa).

Residue Asp79 is the Proton acceptor of the active site.

Belongs to the Maf family. Requires a divalent metal cation as cofactor.

The protein resides in the cytoplasm. The catalysed reaction is a ribonucleoside 5'-triphosphate + H2O = a ribonucleoside 5'-phosphate + diphosphate + H(+). It carries out the reaction a 2'-deoxyribonucleoside 5'-triphosphate + H2O = a 2'-deoxyribonucleoside 5'-phosphate + diphosphate + H(+). In terms of biological role, nucleoside triphosphate pyrophosphatase. May have a dual role in cell division arrest and in preventing the incorporation of modified nucleotides into cellular nucleic acids. This chain is Nucleoside triphosphate pyrophosphatase, found in Mycolicibacterium gilvum (strain PYR-GCK) (Mycobacterium gilvum (strain PYR-GCK)).